Consider the following 526-residue polypeptide: MTRYCRGLSQRQAFLLLTVLALLFILLFVVKDPRAKDSRCQFIWKNDASAQENQQKAEPQVPIMTLSPRVHNKETTSVSSKDLKKQEREAVQGEQAEGKEKRKLETIRPAPENPQSKAEPAAKTPVSEHLDKLPRAPGALSTRKTPMATGAVPAKKKVVQATKSPASSPHPTTRRRQRLKASEFKSEPRWDFEEEYSLDMSSLQTNCSASVKIKASKSPWLQNIFLPNITLFLDSGRFTQSEWNRLEHFAPPFGFMELNQSLVQKVVTRFPPVRQQQLLLASLPTGYSKCITCAVVGNGGILNDSRVGREIDSHDYVFRLSGAVIKGYEQDVGTRTSFYGFTAFSLTQSILILGRRGFQHVPLGKDVRYLHFLEGTRDYEWLEAMFLNQTLAKTHLSWFRHRPQEAFRNALDLDRYLLLHPDFLRYMKNRFLRSKTLDTAHWRIYRPTTGALLLLTALHLCDKVSAYGFITEGHQRFSDHYYDTSWKRLIFYINHDFRLERMVWKRLHDEGIIWLYQRPQSDKAKN.

Over 1 to 12 the chain is Cytoplasmic; that stretch reads MTRYCRGLSQRQ. The chain crosses the membrane as a helical; Signal-anchor for type II membrane protein span at residues 13–33; it reads AFLLLTVLALLFILLFVVKDP. Over 34–526 the chain is Lumenal; that stretch reads RAKDSRCQFI…QRPQSDKAKN (493 aa). The segment at 49-182 is disordered; the sequence is SAQENQQKAE…TRRRQRLKAS (134 aa). The span at 81 to 106 shows a compositional bias: basic and acidic residues; that stretch reads KDLKKQEREAVQGEQAEGKEKRKLET. Residues 161–171 show a composition bias toward polar residues; it reads ATKSPASSPHP. Asparagine 206, asparagine 228, asparagine 259, asparagine 303, and asparagine 388 each carry an N-linked (GlcNAc...) asparagine glycan. Cystine bridges form between cysteine 207–cysteine 290 and cysteine 293–cysteine 461.

It belongs to the glycosyltransferase 29 family. Post-translationally, glycosylated; autosialylated. As to expression, submaxillary gland, mammary gland, spleen and colon.

The protein resides in the golgi apparatus membrane. The enzyme catalyses a beta-D-galactosyl-(1-&gt;3)-N-acetyl-alpha-D-galactosaminyl derivative + CMP-N-acetyl-beta-neuraminate = a beta-D-galactosyl-(1-&gt;3)-[N-acetyl-alpha-neuraminyl-(2-&gt;6)]-N-acetyl-alpha-D-galactosaminyl derivative + CMP + H(+). It catalyses the reaction a 3-O-[N-acetyl-alpha-D-galactosaminyl]-L-seryl-[protein] + CMP-N-acetyl-beta-neuraminate = a 3-O-[N-acetyl-alpha-neuraminosyl-(2-&gt;6)-N-acetyl-alpha-D-galactosaminyl]-L-seryl-[protein] + CMP + H(+). It carries out the reaction a 3-O-[N-acetyl-alpha-D-galactosaminyl]-L-threonyl-[protein] + CMP-N-acetyl-beta-neuraminate = a 3-O-[N-acetyl-alpha-neuraminosyl-(2-&gt;6)-N-acetyl-alpha-D-galactosaminyl]-L-threonyl-[protein] + CMP + H(+). The catalysed reaction is a 3-O-[beta-D-galactosyl-(1-&gt;3)-N-acetyl-alpha-D-galactosaminyl]-L-seryl-[protein] + CMP-N-acetyl-beta-neuraminate = a 3-O-{beta-D-galactosyl-(1-&gt;3)-[N-acetyl-alpha-neuraminosyl-(2-&gt;6)]-N-acetyl-alpha-D-galactosaminyl}-L-seryl-[protein] + CMP + H(+). The enzyme catalyses a 3-O-[beta-D-galactosyl-(1-&gt;3)-N-acetyl-alpha-D-galactosaminyl]-L-threonyl-[protein] + CMP-N-acetyl-beta-neuraminate = a 3-O-{beta-D-galactosyl-(1-&gt;3)-[N-acetyl-alpha-neuraminosyl-(2-&gt;6)]-N-acetyl-alpha-D-galactosaminyl}-L-threonyl-[protein] + CMP + H(+). It catalyses the reaction a 3-O-[N-acetyl-alpha-neuraminyl-(2-&gt;3)-beta-D-galactosyl-(1-&gt;3)-N-acetyl-alpha-D-galactosaminyl]-L-threonyl-[protein] + CMP-N-acetyl-beta-neuraminate = a 3-O-{alpha-Neu5Ac-(2-&gt;3)-beta-D-Gal-(1-&gt;3)-[alpha-Neu5Ac-(2-&gt;6)]-alpha-D-GalNAc}-L-threonyl-[protein] + CMP + H(+). The protein operates within protein modification; protein glycosylation. In terms of biological role, protein sialyltransferase specifically expressed in goblet cells that plays a key role in intestinal host-commensal homeostasis. Conjugates sialic acid with an alpha-2-6 linkage to N-acetylgalactosamine (GalNAc) glycan chains linked to serine or threonine in glycoproteins. Catalyzes the formation of the sialyl-Tn (S-Tn) antigen, an antigen found in intestinal goblet cells. Protein sialylation in globlet cells is essential for mucus integrity and is required to protect the intestinal mucus against excessive bacterial proteolytic degradation. The chain is Alpha-N-acetylgalactosaminide alpha-2,6-sialyltransferase 1 from Mus musculus (Mouse).